Reading from the N-terminus, the 292-residue chain is Elongation factor Ts (292 aa).

Residues 80–83 (TDFV) form an involved in Mg(2+) ion dislocation from EF-Tu region.

The protein belongs to the EF-Ts family.

It localises to the cytoplasm. Associates with the EF-Tu.GDP complex and induces the exchange of GDP to GTP. It remains bound to the aminoacyl-tRNA.EF-Tu.GTP complex up to the GTP hydrolysis stage on the ribosome. This Limosilactobacillus fermentum (strain NBRC 3956 / LMG 18251) (Lactobacillus fermentum) protein is Elongation factor Ts.